We begin with the raw amino-acid sequence, 144 residues long: Transcriptional regulator MraZ (144 aa).

SpoVT-AbrB domains are found at residues 6–48 (TYTP…PTDV) and 77–120 (ADEG…DPVR).

This sequence belongs to the MraZ family. In terms of assembly, forms oligomers.

Its subcellular location is the cytoplasm. It is found in the nucleoid. The polypeptide is Transcriptional regulator MraZ (Nocardioides sp. (strain ATCC BAA-499 / JS614)).